The primary structure comprises 130 residues: Histone H2A type 1-F (130 aa).

The disordered stretch occupies residues 1–22 (MSGRGKQGGKARAKAKTRSSRA). Position 2 is a phosphoserine; by RPS6KA5 (serine 2). Arginine 4 carries the post-translational modification Citrulline; alternate. Position 4 is a symmetric dimethylarginine; by PRMT5; alternate (arginine 4). N6-(2-hydroxyisobutyryl)lysine; alternate is present on lysine 6. Residue lysine 6 is modified to N6-(beta-hydroxybutyryl)lysine; alternate. Over residues 7 to 19 (QGGKARAKAKTRS) the composition is skewed to basic residues. Lysine 10 carries the post-translational modification N6-(2-hydroxyisobutyryl)lysine. Position 10 is an N6-lactoyllysine; alternate (lysine 10). Lysine 37 is subject to N6-(2-hydroxyisobutyryl)lysine; alternate. An N6-(beta-hydroxybutyryl)lysine; alternate modification is found at lysine 37. Lysine 37 is modified (N6-crotonyllysine; alternate). Residues lysine 75, lysine 76, and lysine 96 each carry the N6-(2-hydroxyisobutyryl)lysine modification. The residue at position 96 (lysine 96) is an N6-glutaryllysine; alternate. Glutamine 105 carries the post-translational modification N5-methylglutamine. Lysine 119 carries the N6-(2-hydroxyisobutyryl)lysine; alternate modification. N6-crotonyllysine; alternate is present on residues lysine 119 and lysine 120. N6-glutaryllysine; alternate occurs at positions 119 and 120. Lysine 120 carries the N6-(beta-hydroxybutyryl)lysine; alternate modification. Residue lysine 120 forms a Glycyl lysine isopeptide (Lys-Gly) (interchain with G-Cter in ubiquitin); alternate linkage. Threonine 121 carries the post-translational modification Phosphothreonine; by DCAF1. Lysine 126 is subject to N6-(beta-hydroxybutyryl)lysine; alternate. At lysine 126 the chain carries N6-crotonyllysine; alternate. Lysine 126 is modified (N6-glutaryllysine; alternate).

Belongs to the histone H2A family. As to quaternary structure, the nucleosome is a histone octamer containing two molecules each of H2A, H2B, H3 and H4 assembled in one H3-H4 heterotetramer and two H2A-H2B heterodimers. The octamer wraps approximately 147 bp of DNA. Deiminated on Arg-4 in granulocytes upon calcium entry. In terms of processing, monoubiquitination of Lys-120 (H2AK119Ub) by RING1, TRIM37 and RNF2/RING2 complex gives a specific tag for epigenetic transcriptional repression and participates in X chromosome inactivation of female mammals. It is involved in the initiation of both imprinted and random X inactivation. Ubiquitinated H2A is enriched in inactive X chromosome chromatin. Ubiquitination of H2A functions downstream of methylation of 'Lys-27' of histone H3 (H3K27me). H2AK119Ub by RNF2/RING2 can also be induced by ultraviolet and may be involved in DNA repair. Following DNA double-strand breaks (DSBs), it is ubiquitinated through 'Lys-63' linkage of ubiquitin moieties by the E2 ligase UBE2N and the E3 ligases RNF8 and RNF168, leading to the recruitment of repair proteins to sites of DNA damage. Ubiquitination at Lys-14 and Lys-16 (H2AK13Ub and H2AK15Ub, respectively) in response to DNA damage is initiated by RNF168 that mediates monoubiquitination at these 2 sites, and 'Lys-63'-linked ubiquitin are then conjugated to monoubiquitin; RNF8 is able to extend 'Lys-63'-linked ubiquitin chains in vitro. H2AK119Ub and ionizing radiation-induced 'Lys-63'-linked ubiquitination (H2AK13Ub and H2AK15Ub) are distinct events. Post-translationally, phosphorylation on Ser-2 (H2AS1ph) is enhanced during mitosis. Phosphorylation on Ser-2 by RPS6KA5/MSK1 directly represses transcription. Acetylation of H3 inhibits Ser-2 phosphorylation by RPS6KA5/MSK1. Phosphorylation at Thr-121 (H2AT120ph) by DCAF1 is present in the regulatory region of many tumor suppresor genes and down-regulates their transcription. Symmetric dimethylation on Arg-4 by the PRDM1/PRMT5 complex may play a crucial role in the germ-cell lineage. In terms of processing, glutamine methylation at Gln-105 (H2AQ104me) by FBL is specifically dedicated to polymerase I. It is present at 35S ribosomal DNA locus and impairs binding of the FACT complex. Post-translationally, crotonylation (Kcr) is specifically present in male germ cells and marks testis-specific genes in post-meiotic cells, including X-linked genes that escape sex chromosome inactivation in haploid cells. Crotonylation marks active promoters and enhancers and confers resistance to transcriptional repressors. It is also associated with post-meiotically activated genes on autosomes. Hydroxybutyrylation of histones is induced by starvation. In terms of processing, lactylated in macrophages by EP300/P300 by using lactoyl-CoA directly derived from endogenous or exogenous lactate, leading to stimulates gene transcription.

The protein localises to the nucleus. It localises to the chromosome. Functionally, core component of nucleosome. Nucleosomes wrap and compact DNA into chromatin, limiting DNA accessibility to the cellular machineries which require DNA as a template. Histones thereby play a central role in transcription regulation, DNA repair, DNA replication and chromosomal stability. DNA accessibility is regulated via a complex set of post-translational modifications of histones, also called histone code, and nucleosome remodeling. The sequence is that of Histone H2A type 1-F (Hist1h2af) from Mus musculus (Mouse).